We begin with the raw amino-acid sequence, 1355 residues long: Phosphoribosylformylglycinamidine synthase (1355 aa).

ATP is bound by residues 326 to 337 and 406 to 408; these read GAETGTGGRLRD and IGF. Residues Glu-743, Asn-747, and Asp-911 each contribute to the Mg(2+) site. Residue Ser-913 participates in ATP binding. Residues 1087-1325 enclose the Glutamine amidotransferase type-1 domain; sequence KVAVIREEGS…LSWQWPFMPE (239 aa). The active-site Nucleophile is the Cys-1182. Active-site residues include His-1310 and Glu-1312.

In the N-terminal section; belongs to the FGAMS family.

It is found in the cytoplasm. It catalyses the reaction N(2)-formyl-N(1)-(5-phospho-beta-D-ribosyl)glycinamide + L-glutamine + ATP + H2O = 2-formamido-N(1)-(5-O-phospho-beta-D-ribosyl)acetamidine + L-glutamate + ADP + phosphate + H(+). It participates in purine metabolism; IMP biosynthesis via de novo pathway; 5-amino-1-(5-phospho-D-ribosyl)imidazole from N(2)-formyl-N(1)-(5-phospho-D-ribosyl)glycinamide: step 1/2. In terms of biological role, phosphoribosylformylglycinamidine synthase involved in the purines biosynthetic pathway. Catalyzes the ATP-dependent conversion of formylglycinamide ribonucleotide (FGAR) and glutamine to yield formylglycinamidine ribonucleotide (FGAM) and glutamate. The sequence is that of Phosphoribosylformylglycinamidine synthase (purL) from Dictyostelium discoideum (Social amoeba).